The following is a 424-amino-acid chain: GDP-fucose protein O-fucosyltransferase 2 (424 aa).

The first 20 residues, 1–20, serve as a signal peptide directing secretion; it reads MHFFPIQLLVLFFAEKIAFA. Position 51–55 (51–55) interacts with GDP-beta-L-fucose; it reads GEGFN. The active-site Proton acceptor is the E52. C154 and C187 are oxidised to a cystine. N205 carries N-linked (GlcNAc...) asparagine glycosylation. GDP-beta-L-fucose is bound by residues 288 to 290, D366, and 383 to 384; these read HWR and TF. C407 and C414 are oxidised to a cystine.

The protein belongs to the glycosyltransferase 68 family. Expressed in the anterior part of embryos, in the hypodermal and neuronal cells of the head. Expressed at different levels in a variety of cell types after hatching, including neuronal, hypodermal, muscle, intestinal, and somatic gonadal cells. Expressed in the nerve ring around the pharynx, in dorsal and ventral nerve cords, intestine, and a variety of hypodermal cells of L1-L3 larvae. Expressed in gonadal sheath cells, spermatheca, and tissues surrounding the vulva of adult hermaphrodites, and in the body wall muscle and hypodermal cells of adults of both sexes.

Its subcellular location is the endoplasmic reticulum. It is found in the golgi apparatus. The catalysed reaction is L-seryl-[protein] + GDP-beta-L-fucose = 3-O-(alpha-L-fucosyl)-L-seryl-[protein] + GDP + H(+). It carries out the reaction L-threonyl-[protein] + GDP-beta-L-fucose = 3-O-(alpha-L-fucosyl)-L-threonyl-[protein] + GDP + H(+). Its pathway is protein modification; protein glycosylation. In terms of biological role, catalyzes the reaction that attaches fucose through an O-glycosidic linkage to a conserved serine or threonine residue in the consensus sequence C1-X-X-S/T-C2 of thrombospondin type I repeats (TSRs) where C1 and C2 are the first and second cysteines of the repeat, respectively. O-fucosylates members of several protein families including the ADAMTS superfamily and the thrombospondin (TSP) and spondin families. This chain is GDP-fucose protein O-fucosyltransferase 2 (pad-2), found in Caenorhabditis elegans.